The sequence spans 370 residues: Putrescine-binding periplasmic protein PotF (370 aa).

An N-terminal signal peptide occupies residues 1 to 26 (MTALNKKWLSGLVAGALMAVSVGTLA). Ser-38 lines the putrescine pocket. A disulfide bond links Cys-175 and Cys-239. The putrescine site is built by Asp-247 and Asp-278.

It belongs to the bacterial solute-binding protein PotD/PotF family. As to quaternary structure, the complex is composed of two ATP-binding proteins (PotG), two transmembrane proteins (PotH and PotI) and a solute-binding protein (PotF).

The protein localises to the periplasm. Its activity is regulated as follows. Transport is feedback inhibited by intracellular polyamines. Its function is as follows. Part of the ABC transporter complex PotFGHI involved in putrescine uptake. Binds putrescine. Imports putrescine for maintenance of the optimal concentration of polyamines necessary for cell growth in the presence of glucose. This Escherichia coli (strain K12) protein is Putrescine-binding periplasmic protein PotF.